We begin with the raw amino-acid sequence, 459 residues long: ATP synthase subunit beta (459 aa).

Residue 148–155 (GGAGVGKT) participates in ATP binding.

It belongs to the ATPase alpha/beta chains family. F-type ATPases have 2 components, CF(1) - the catalytic core - and CF(0) - the membrane proton channel. CF(1) has five subunits: alpha(3), beta(3), gamma(1), delta(1), epsilon(1). CF(0) has three main subunits: a(1), b(2) and c(9-12). The alpha and beta chains form an alternating ring which encloses part of the gamma chain. CF(1) is attached to CF(0) by a central stalk formed by the gamma and epsilon chains, while a peripheral stalk is formed by the delta and b chains.

The protein resides in the cell inner membrane. It catalyses the reaction ATP + H2O + 4 H(+)(in) = ADP + phosphate + 5 H(+)(out). Functionally, produces ATP from ADP in the presence of a proton gradient across the membrane. The catalytic sites are hosted primarily by the beta subunits. In Ruthia magnifica subsp. Calyptogena magnifica, this protein is ATP synthase subunit beta.